A 308-amino-acid chain; its full sequence is GTPase IMAP family member 5 (308 aa).

Residues 1-283 (MEHLQKSTYG…VKSCWSSHTA (283 aa)) lie on the Cytoplasmic side of the membrane. An AIG1-type G domain is found at 24-227 (SSCLRILLVG…HSNDLFLHAE (204 aa)). Residues 33–41 (GKSGCGKSA), S54, 151–153 (RKE), and N188 contribute to the GTP site. A helical; Anchor for type IV membrane protein membrane pass occupies residues 284-304 (ACALLIVLGLTLLTTFINLCI). The Mitochondrial intermembrane portion of the chain corresponds to 305–308 (SRCK).

Belongs to the TRAFAC class TrmE-Era-EngA-EngB-Septin-like GTPase superfamily. AIG1/Toc34/Toc159-like paraseptin GTPase family. IAN subfamily. In terms of assembly, interacts with BAD, BAK1, BAX, BCL2, BCL2L1/Bcl-xL and BCL2L11/BimEL. The interaction with BAX is increased, when cells initiate apoptosis upon IL2 withdrawal. Forms a complex with BCL2L1 or MCL1 and HSPA8/HSC70; the interaction between HSPA8 and BCL2L1 or MCL1 is impaired in the absence of GIMAP5. May interact (via N-terminus) with microtubules. As to expression, expressed in thymus (in thymocytes), spleen (in splenocytes), lymph node and lung. Highly expressed in T lymphocytes. Expressed in B cells and in distinct lineages of hematopoietic bone marrow cells, including natural killer, B, T, myeloid and erythroid lineages. Expressed in liver endothelial cells.

It is found in the lysosome. The protein resides in the lysosome membrane. Its subcellular location is the endosome. The protein localises to the multivesicular body membrane. It localises to the endosome membrane. Its function is as follows. Plays a role in T lymphocyte development and the optimal generation of CD4/CD8 double-positive thymocytes. Inhibitor of GSK3A. May act by sequestering GSK3A in cytoplasmic vesicles and impairing its translocation to the nucleus. Consequently, impairs GSK3A-dependent transcriptional program and regulation of the DNA damage response occurring during T cells proliferation. Required for the survival of bone marrow hematopoietic stem cells, as well as of peripheral T cells, natural killer (NK) and NK T-cell development and the maintenance of normal liver function. May promote the survival of mature T lymphocytes upon cytokine withdrawal. May regulate Ca(2+) homeostasis by modulating lysosomal Ca(2+) stores, preventing its accumulation in the absence of T cell activation. May play a role in mitochondrial DNA segregation in hematopoietic tissues. Is a regulator of liver endothelial cell homeostasis. This is GTPase IMAP family member 5 (Gimap5) from Mus musculus (Mouse).